We begin with the raw amino-acid sequence, 455 residues long: Argininosuccinate lyase (455 aa).

The protein belongs to the lyase 1 family. Argininosuccinate lyase subfamily.

The protein resides in the cytoplasm. It carries out the reaction 2-(N(omega)-L-arginino)succinate = fumarate + L-arginine. It functions in the pathway amino-acid biosynthesis; L-arginine biosynthesis; L-arginine from L-ornithine and carbamoyl phosphate: step 3/3. This Caulobacter sp. (strain K31) protein is Argininosuccinate lyase.